Reading from the N-terminus, the 461-residue chain is MGSFTKEEFDCHILDEGFTAKDILDQKINEVSSSDDKDAFYVADLGDVLKKHLRWLKALPRVTPFYAVKCNDSRAIVSTLAAIGTGFDCASKTEIQLVQGLGVPPERIIYANPCKQVSQIKYAASNGVQMMTFDSEIELMKVARAHPKAKLVLRIATDDSKAVCRLSVKFGATLKTSRLLLERAKELNIDVIGVSFHVGSGCTDPETFVQAVSDARCVFDMGTEVGFSMYLLDIGGGFPGSEDTKLKFEEITSVINPALDKYFPSDSGVRIIAEPGRYYVASAFTLAVNIIAKKTVWKEQTGSDDEDESNEQTLMYYVNDGVYGSFNCILYDHAHVKALLQKRPKPDEKYYSSSIWGPTCDGLDRIVERCSLPEMHVGDWMLFENMGAYTVAAASTFNGFQRPNIYYVMSRSMWQLMKQIQSHGFPPEVEEQDVGTLPMSCAQESGMDRHPAACASASINV.

Lys69 bears the N6-(pyridoxal phosphate)lysine mark. Pyridoxal 5'-phosphate-binding positions include Ser200, Gly237, and 274–277 (EPGR). A Phosphoserine; by CK2 modification is found at Ser303. Residue 331–332 (YD) coordinates substrate. Cys360 acts as the Proton donor; shared with dimeric partner in catalysis. An S-nitrosocysteine modification is found at Cys360. Substrate is bound at residue Asp361. Tyr389 lines the pyridoxal 5'-phosphate pocket.

Belongs to the Orn/Lys/Arg decarboxylase class-II family. As to quaternary structure, homodimer. Only the dimer is catalytically active, as the active sites are constructed of residues from both monomers. Requires pyridoxal 5'-phosphate as cofactor.

The catalysed reaction is L-ornithine + H(+) = putrescine + CO2. It functions in the pathway amine and polyamine biosynthesis; putrescine biosynthesis via L-ornithine pathway; putrescine from L-ornithine: step 1/1. Inhibited by antizymes (AZs) OAZ1, OAZ2 and OAZ3 in response to polyamine levels. AZs inhibit the assembly of the functional homodimer by binding to ODC monomers. Additionally, OAZ1 targets ODC monomers for ubiquitin-independent proteolytic destruction by the 26S proteasome. In terms of biological role, catalyzes the first and rate-limiting step of polyamine biosynthesis that converts ornithine into putrescine, which is the precursor for the polyamines, spermidine and spermine. Polyamines are essential for cell proliferation and are implicated in cellular processes, ranging from DNA replication to apoptosis. In Rattus norvegicus (Rat), this protein is Ornithine decarboxylase (Odc1).